Here is a 109-residue protein sequence, read N- to C-terminus: Sperm-specific class P protein 16 (109 aa).

One can recognise an MSP domain in the interval serine 2–alanine 109.

As to expression, expressed at higher level in testis.

This is Sperm-specific class P protein 16 (ssp-16) from Caenorhabditis elegans.